The chain runs to 218 residues: Thiopurine S-methyltransferase (218 aa).

4 residues coordinate S-adenosyl-L-methionine: tryptophan 10, leucine 45, glutamate 66, and arginine 123.

Belongs to the class I-like SAM-binding methyltransferase superfamily. TPMT family.

The protein localises to the cytoplasm. The catalysed reaction is S-adenosyl-L-methionine + a thiopurine = S-adenosyl-L-homocysteine + a thiopurine S-methylether.. This Pseudomonas aeruginosa (strain ATCC 15692 / DSM 22644 / CIP 104116 / JCM 14847 / LMG 12228 / 1C / PRS 101 / PAO1) protein is Thiopurine S-methyltransferase.